We begin with the raw amino-acid sequence, 163 residues long: Large ribosomal subunit protein uL10 (163 aa).

Belongs to the universal ribosomal protein uL10 family. In terms of assembly, part of the ribosomal stalk of the 50S ribosomal subunit. The N-terminus interacts with L11 and the large rRNA to form the base of the stalk. The C-terminus forms an elongated spine to which L12 dimers bind in a sequential fashion forming a multimeric L10(L12)X complex.

Its function is as follows. Forms part of the ribosomal stalk, playing a central role in the interaction of the ribosome with GTP-bound translation factors. The sequence is that of Large ribosomal subunit protein uL10 from Haemophilus influenzae (strain PittGG).